Reading from the N-terminus, the 344-residue chain is Palmitoyltransferase ZDHHC4 (344 aa).

The Lumenal segment spans residues 1-2 (MD). The helical transmembrane segment at 3–23 (FLVLFLFYLASVLMGLVLICV) threads the bilayer. Over 24-67 (CSKTHSLKGLARGGAQIFSCIIPECLQRAVHGLLHYLFHTRNHT) the chain is Cytoplasmic. The helical transmembrane segment at 68 to 88 (FIVLHLVLQGMVYTEYTWEVF) threads the bilayer. The Lumenal portion of the chain corresponds to 89 to 99 (GYCQELELSLH). A helical membrane pass occupies residues 100-120 (YLLLPYLLLGVNLFFFTLTCG). At 121 to 192 (TNPGIITKAN…NNCIGAWNIR (72 aa)) the chain is on the cytoplasmic side. One can recognise a DHHC domain in the interval 149-199 (VRCSTCDLRKPARSKHCSVCNWCVHRFDHHCVWVNNCIGAWNIRYFLIYVL). Cysteine 179 functions as the S-palmitoyl cysteine intermediate in the catalytic mechanism. The helical transmembrane segment at 193–213 (YFLIYVLTLTASAATVAIVST) threads the bilayer. The Lumenal segment spans residues 214 to 255 (TFLVHLVVMSDLYQETYIDDLGHLHVMDTVFLIQYLFLTFPR). A helical membrane pass occupies residues 256-276 (IVFMLGFVVVLSFLLGGYLLF). Residues 277–344 (VLYLAATNQT…FPCHERKKQE (68 aa)) lie on the Cytoplasmic side of the membrane. Positions 341–344 (KKQE) match the Di-lysine motif motif.

It belongs to the DHHC palmitoyltransferase family. In terms of assembly, interacts with CPT1A.

Its subcellular location is the endoplasmic reticulum membrane. It is found in the golgi apparatus membrane. The protein resides in the cell membrane. It catalyses the reaction L-cysteinyl-[protein] + hexadecanoyl-CoA = S-hexadecanoyl-L-cysteinyl-[protein] + CoA. Palmitoyltransferase that catalyzes the addition of palmitate onto protein substrates including the D(2) dopamine receptor DRD2, GSK3B or MAVS. Mediates GSK3B palmitoylation to prevent its AKT1-mediated phosphorylation leading to activation of the STAT3 signaling pathway. Also catalyzes MAVS palmitoylation which promotes its stabilization and activation by inhibiting 'Lys-48'- but facilitating 'Lys-63'-linked ubiquitination. The sequence is that of Palmitoyltransferase ZDHHC4 from Homo sapiens (Human).